The following is a 156-amino-acid chain: Small ribosomal subunit protein uS7 (156 aa).

Belongs to the universal ribosomal protein uS7 family. In terms of assembly, part of the 30S ribosomal subunit. Contacts proteins S9 and S11.

Functionally, one of the primary rRNA binding proteins, it binds directly to 16S rRNA where it nucleates assembly of the head domain of the 30S subunit. Is located at the subunit interface close to the decoding center, probably blocks exit of the E-site tRNA. The chain is Small ribosomal subunit protein uS7 from Cronobacter sakazakii (strain ATCC BAA-894) (Enterobacter sakazakii).